The following is a 420-amino-acid chain: Cysteate-C-fatty acyltransferase (420 aa).

Pyridoxal 5'-phosphate-binding positions include 114–115 (GY), histidine 219, threonine 247, and alanine 249. Lysine 250 is subject to N6-(pyridoxal phosphate)lysine.

It belongs to the class-II pyridoxal-phosphate-dependent aminotransferase family. The cofactor is pyridoxal 5'-phosphate.

It catalyses the reaction isopentadecanoyl-CoA + L-cysteate + H(+) = 3-oxocapnine + CO2 + CoA. It participates in lipid metabolism. In terms of biological role, transferase involved in the biosynthesis of capnine, a sulfonolipid present in the outer membrane of gliding Bacteroidetes and essential for gliding motility. Catalyzes the formation of 3-dehydrocapnine from cysteate and isopentadecanoyl-CoA (13-methyl-myristoyl-CoA). In vitro, products are also detected when 13-methyl-myristic acid is substituted with tridecylic acid, myristic acid, pentadecanoic acid or palmitic acid. In Capnocytophaga ochracea (strain ATCC 27872 / DSM 7271 / CCUG 9716 / JCM 12966 / NCTC 12371 / SS31 / VPI 2845) (Bacteroides ochraceus), this protein is Cysteate-C-fatty acyltransferase.